A 405-amino-acid chain; its full sequence is Acetate kinase (405 aa).

N7 lines the Mg(2+) pocket. K14 contributes to the ATP binding site. A substrate-binding site is contributed by R90. Catalysis depends on D147, which acts as the Proton donor/acceptor. Residues 207–211 (HLGNG), 282–284 (DMR), and 330–334 (GVGEN) contribute to the ATP site. Position 383 (E383) interacts with Mg(2+).

It belongs to the acetokinase family. As to quaternary structure, homodimer. The cofactor is Mg(2+). It depends on Mn(2+) as a cofactor.

It localises to the cytoplasm. The enzyme catalyses acetate + ATP = acetyl phosphate + ADP. It functions in the pathway metabolic intermediate biosynthesis; acetyl-CoA biosynthesis; acetyl-CoA from acetate: step 1/2. In terms of biological role, catalyzes the formation of acetyl phosphate from acetate and ATP. Can also catalyze the reverse reaction. The chain is Acetate kinase from Pseudothermotoga lettingae (strain ATCC BAA-301 / DSM 14385 / NBRC 107922 / TMO) (Thermotoga lettingae).